A 432-amino-acid chain; its full sequence is Adenylosuccinate synthetase (432 aa).

GTP-binding positions include 13 to 19 (GDEGKGK) and 41 to 43 (GHT). Asp14 (proton acceptor) is an active-site residue. Residues Asp14 and Gly41 each contribute to the Mg(2+) site. Residues 14–17 (DEGK), 39–42 (NAGH), Thr130, Arg144, Gln225, Thr240, and Arg304 each bind IMP. His42 functions as the Proton donor in the catalytic mechanism. Residue 300 to 306 (AVTGRPR) coordinates substrate. GTP contacts are provided by residues Arg306, 332–334 (KLD), and 415–417 (STG).

The protein belongs to the adenylosuccinate synthetase family. In terms of assembly, homodimer. Mg(2+) is required as a cofactor.

It is found in the cytoplasm. The catalysed reaction is IMP + L-aspartate + GTP = N(6)-(1,2-dicarboxyethyl)-AMP + GDP + phosphate + 2 H(+). It participates in purine metabolism; AMP biosynthesis via de novo pathway; AMP from IMP: step 1/2. Plays an important role in the de novo pathway of purine nucleotide biosynthesis. Catalyzes the first committed step in the biosynthesis of AMP from IMP. The protein is Adenylosuccinate synthetase of Actinobacillus pleuropneumoniae serotype 3 (strain JL03).